The chain runs to 183 residues: Protein Syd (183 aa).

The protein belongs to the Syd family.

The protein resides in the cell inner membrane. Functionally, interacts with the SecY protein in vivo. May bind preferentially to an uncomplexed state of SecY, thus functioning either as a chelating agent for excess SecY in the cell or as a regulatory factor that negatively controls the translocase function. The sequence is that of Protein Syd from Yersinia enterocolitica serotype O:8 / biotype 1B (strain NCTC 13174 / 8081).